A 56-amino-acid chain; its full sequence is Large ribosomal subunit protein bL33 (56 aa).

Belongs to the bacterial ribosomal protein bL33 family.

This is Large ribosomal subunit protein bL33 from Histophilus somni (strain 129Pt) (Haemophilus somnus).